The following is a 33-amino-acid chain: Beta-amanitin proprotein (33 aa).

The propeptide occupies 1 to 10 (MSDINATRLP). The segment at residues 11–18 (IWGIGCDP) is a cross-link (cyclopeptide (Ile-Pro)). Positions 12-16 (WGIGC) form a cross-link, 2'-cysteinyl-6'-hydroxytryptophan sulfoxide (Trp-Cys). A propeptide spanning residues 19–33 (CVGDDVAALTTRGEA) is cleaved from the precursor.

The protein belongs to the MSDIN fungal toxin family. Processed by the macrocyclase-peptidase enzyme POPB to yield a toxic cyclic decapeptide. POPB first removes 10 residues from the N-terminus. Conformational trapping of the remaining peptide forces the enzyme to release this intermediate rather than proceed to macrocyclization. The enzyme rebinds the remaining peptide in a different conformation and catalyzes macrocyclization of the N-terminal 8 residues.

Functionally, toxin belonging to the bicyclic octapeptides amatoxins that acts by binding non-competitively to RNA polymerase II and greatly slowing the elongation of transcripts from target promoters. This Amanita rimosa protein is Beta-amanitin proprotein.